Reading from the N-terminus, the 170-residue chain is tRNA-splicing endonuclease (170 aa).

Active-site residues include Y106, H116, and K147.

Belongs to the tRNA-intron endonuclease family. Archaeal short subfamily. As to quaternary structure, homotetramer; although the tetramer contains four active sites, only two participate in the cleavage. Therefore, it should be considered as a dimer of dimers.

The catalysed reaction is pretRNA = a 3'-half-tRNA molecule with a 5'-OH end + a 5'-half-tRNA molecule with a 2',3'-cyclic phosphate end + an intron with a 2',3'-cyclic phosphate and a 5'-hydroxyl terminus.. Endonuclease that removes tRNA introns. Cleaves pre-tRNA at the 5'- and 3'-splice sites to release the intron. The products are an intron and two tRNA half-molecules bearing 2',3' cyclic phosphate and 5'-OH termini. Recognizes a pseudosymmetric substrate in which 2 bulged loops of 3 bases are separated by a stem of 4 bp. This is tRNA-splicing endonuclease from Methanothermobacter thermautotrophicus (strain ATCC 29096 / DSM 1053 / JCM 10044 / NBRC 100330 / Delta H) (Methanobacterium thermoautotrophicum).